Consider the following 225-residue polypeptide: Ribonuclease 3 (225 aa).

Residues 7-132 (MKAFEARLGY…VIAAVYRDGG (126 aa)) enclose the RNase III domain. Glutamate 45 contacts Mg(2+). The active site involves aspartate 49. Aspartate 118 and glutamate 121 together coordinate Mg(2+). Residue glutamate 121 is part of the active site. In terms of domain architecture, DRBM spans 157-225 (DAKTALQEWA…AARKLLDSLD (69 aa)).

Belongs to the ribonuclease III family. Homodimer. The cofactor is Mg(2+).

It localises to the cytoplasm. It carries out the reaction Endonucleolytic cleavage to 5'-phosphomonoester.. Its function is as follows. Digests double-stranded RNA. Involved in the processing of primary rRNA transcript to yield the immediate precursors to the large and small rRNAs (23S and 16S). Processes some mRNAs, and tRNAs when they are encoded in the rRNA operon. Processes pre-crRNA and tracrRNA of type II CRISPR loci if present in the organism. This is Ribonuclease 3 from Ruegeria pomeroyi (strain ATCC 700808 / DSM 15171 / DSS-3) (Silicibacter pomeroyi).